We begin with the raw amino-acid sequence, 473 residues long: Photosystem II CP43 reaction center protein (473 aa).

Positions 1–14 are excised as a propeptide; that stretch reads MKTLYSPRRFYPVE. T15 carries the N-acetylthreonine modification. Position 15 is a phosphothreonine (T15). 5 helical membrane-spanning segments follow: residues 69–93, 134–155, 178–200, 255–275, and 291–312; these read LFEVAHFVPEKPMYEQGLILLPHLA, LLGPETLEESFPFFGYVWKDRN, KALYFGGVYDTWAPGGGDVRKIS, KPFAWARRALVWSGEAYLSYS, and WFNNTAYPSEFYGPTGPEASQA. Position 367 (E367) interacts with [CaMn4O5] cluster. The chain crosses the membrane as a helical span at residues 447-471; the sequence is RARAAAAGFEKGIDRDLEPVLFMTP.

Belongs to the PsbB/PsbC family. PsbC subfamily. PSII is composed of 1 copy each of membrane proteins PsbA, PsbB, PsbC, PsbD, PsbE, PsbF, PsbH, PsbI, PsbJ, PsbK, PsbL, PsbM, PsbT, PsbX, PsbY, PsbZ, Psb30/Ycf12, at least 3 peripheral proteins of the oxygen-evolving complex and a large number of cofactors. It forms dimeric complexes. It depends on Binds multiple chlorophylls and provides some of the ligands for the Ca-4Mn-5O cluster of the oxygen-evolving complex. It may also provide a ligand for a Cl- that is required for oxygen evolution. PSII binds additional chlorophylls, carotenoids and specific lipids. as a cofactor.

The protein localises to the plastid. It is found in the chloroplast thylakoid membrane. One of the components of the core complex of photosystem II (PSII). It binds chlorophyll and helps catalyze the primary light-induced photochemical processes of PSII. PSII is a light-driven water:plastoquinone oxidoreductase, using light energy to abstract electrons from H(2)O, generating O(2) and a proton gradient subsequently used for ATP formation. This is Photosystem II CP43 reaction center protein from Ranunculus macranthus (Large buttercup).